The sequence spans 247 residues: tRNA (guanine-N(1)-)-methyltransferase (247 aa).

S-adenosyl-L-methionine-binding positions include Gly113 and 133–138; that span reads IGDFVM.

It belongs to the RNA methyltransferase TrmD family. Homodimer.

The protein localises to the cytoplasm. It carries out the reaction guanosine(37) in tRNA + S-adenosyl-L-methionine = N(1)-methylguanosine(37) in tRNA + S-adenosyl-L-homocysteine + H(+). Functionally, specifically methylates guanosine-37 in various tRNAs. The protein is tRNA (guanine-N(1)-)-methyltransferase of Vibrio campbellii (strain ATCC BAA-1116).